Consider the following 119-residue polypeptide: Protein TusC (119 aa).

Belongs to the DsrF/TusC family. Heterohexamer, formed by a dimer of trimers. The hexameric TusBCD complex contains 2 copies each of TusB, TusC and TusD. The TusBCD complex interacts with TusE.

The protein resides in the cytoplasm. In terms of biological role, part of a sulfur-relay system required for 2-thiolation of 5-methylaminomethyl-2-thiouridine (mnm(5)s(2)U) at tRNA wobble positions. This chain is Protein TusC, found in Buchnera aphidicola subsp. Baizongia pistaciae (strain Bp).